Reading from the N-terminus, the 260-residue chain is Thrombin-like enzyme gloshedobin (260 aa).

An N-terminal signal peptide occupies residues 1–18; that stretch reads MVLIRVQANLLILQLSYA. Residues 19-24 constitute a propeptide that is removed on maturation; the sequence is QKSSEL. One can recognise a Peptidase S1 domain in the interval 25 to 252; sequence IIGGDECNIN…TEWIQSIIAG (228 aa). Disulfide bonds link C31–C165, C52–C68, C100–C258, C144–C212, C176–C191, and C202–C227. Active-site charge relay system residues include H67 and D112. N-linked (GlcNAc...) asparagine glycosylation is found at N123 and N124. S206 serves as the catalytic Charge relay system.

This sequence belongs to the peptidase S1 family. Snake venom subfamily. Monomer. Expressed by the venom gland.

The protein resides in the secreted. With respect to regulation, completely inhibited by PMSF, and N-tosyl-Lphenylalanine chloromethyl ketone (TPCK) and poorly inhibited by benzamidine and derivates. Not inhibited by EDTA, heparin and hirudin. Its function is as follows. Thrombin-like snake venom serine protease. The recombinant form clots fibrinogen by cleaving fibrinogen Aalpha chain (FGA), and slowly Bbeta chain (FGB). Has amidolytic activities. In Gloydius shedaoensis (Shedao island pit viper), this protein is Thrombin-like enzyme gloshedobin.